The following is a 245-amino-acid chain: Probable transcriptional regulatory protein LVIS_1199 (245 aa).

Positions 1 to 23 are disordered; it reads MSGHSKWHNIQGRKNAQDAKRGK.

It belongs to the TACO1 family.

The protein localises to the cytoplasm. This Levilactobacillus brevis (strain ATCC 367 / BCRC 12310 / CIP 105137 / JCM 1170 / LMG 11437 / NCIMB 947 / NCTC 947) (Lactobacillus brevis) protein is Probable transcriptional regulatory protein LVIS_1199.